Reading from the N-terminus, the 223-residue chain is Noggin (223 aa).

The first 26 residues, 1–26 (MDPPRLRVATYLLLLSVGLLLHGGAC), serve as a signal peptide directing secretion. N-linked (GlcNAc...) asparagine glycosylation occurs at Asn-61. 4 disulfides stabilise this stretch: Cys-143-Cys-180, Cys-166-Cys-217, Cys-172-Cys-219, and Cys-195-Cys-204.

It belongs to the noggin family. As to quaternary structure, homodimer.

The protein localises to the secreted. Functionally, inhibitor of bone morphogenetic proteins (BMP) signaling. The chain is Noggin (nog) from Takifugu rubripes (Japanese pufferfish).